The following is a 246-amino-acid chain: Probable transcriptional regulatory protein CLJ_B3338 (246 aa).

The protein belongs to the TACO1 family.

The protein resides in the cytoplasm. In Clostridium botulinum (strain 657 / Type Ba4), this protein is Probable transcriptional regulatory protein CLJ_B3338.